Reading from the N-terminus, the 207-residue chain is Probable glutathione S-transferase 5 (207 aa).

In terms of domain architecture, GST N-terminal spans 2-81 (VSYKLTYFNG…FLAREFKLNG (80 aa)). Residues tyrosine 8, tryptophan 39, lysine 43, 51-53 (GQL), and 65-66 (QS) contribute to the glutathione site. The 125-residue stretch at 83–207 (TAWEEAQVNS…WIETRPVTPF (125 aa)) folds into the GST C-terminal domain.

This sequence belongs to the GST superfamily. Sigma family.

It catalyses the reaction RX + glutathione = an S-substituted glutathione + a halide anion + H(+). Its function is as follows. Conjugation of reduced glutathione to a wide number of exogenous and endogenous hydrophobic electrophiles. May play a role in the detoxification of reactive oxygen species produced during pathogenic bacterial infection. This Caenorhabditis elegans protein is Probable glutathione S-transferase 5 (gst-5).